The following is a 200-amino-acid chain: Small ribosomal subunit protein eS8A (200 aa).

Disordered stretches follow at residues 1 to 40 and 123 to 145; these read MGIT…RIGP and SKGK…KHSA. Residues 135–145 are compositionally biased toward basic residues; it reads KSKHVQRKHSA.

This sequence belongs to the eukaryotic ribosomal protein eS8 family. In terms of assembly, component of the small ribosomal subunit (SSU). Mature yeast ribosomes consist of a small (40S) and a large (60S) subunit. The 40S small subunit contains 1 molecule of ribosomal RNA (18S rRNA) and at least 33 different proteins. The large 60S subunit contains 3 rRNA molecules (25S, 5.8S and 5S rRNA) and at least 46 different proteins.

Its subcellular location is the cytoplasm. Its function is as follows. Component of the ribosome, a large ribonucleoprotein complex responsible for the synthesis of proteins in the cell. The small ribosomal subunit (SSU) binds messenger RNAs (mRNAs) and translates the encoded message by selecting cognate aminoacyl-transfer RNA (tRNA) molecules. The large subunit (LSU) contains the ribosomal catalytic site termed the peptidyl transferase center (PTC), which catalyzes the formation of peptide bonds, thereby polymerizing the amino acids delivered by tRNAs into a polypeptide chain. The nascent polypeptides leave the ribosome through a tunnel in the LSU and interact with protein factors that function in enzymatic processing, targeting, and the membrane insertion of nascent chains at the exit of the ribosomal tunnel. The protein is Small ribosomal subunit protein eS8A (rps801) of Schizosaccharomyces pombe (strain 972 / ATCC 24843) (Fission yeast).